The chain runs to 173 residues: Peptidoglycan-associated lipoprotein (173 aa).

Positions 1–21 are cleaved as a signal peptide; the sequence is MQLNKVLKGLMIALPVMAIAA. C22 is lipidated: N-palmitoyl cysteine. C22 carries the S-diacylglycerol cysteine lipid modification. The interval 30–58 is disordered; sequence NDGSEGMLGAGTGMDANGGNGNMSSEEQA. Residues 35 to 50 are compositionally biased toward gly residues; the sequence is GMLGAGTGMDANGGNG. Residues 60–173 form the OmpA-like domain; sequence LQMQQLQQNN…SKNRRAVLVY (114 aa).

The protein belongs to the Pal lipoprotein family. The Tol-Pal system is composed of five core proteins: the inner membrane proteins TolA, TolQ and TolR, the periplasmic protein TolB and the outer membrane protein Pal. They form a network linking the inner and outer membranes and the peptidoglycan layer.

Its subcellular location is the cell outer membrane. Functionally, part of the Tol-Pal system, which plays a role in outer membrane invagination during cell division and is important for maintaining outer membrane integrity. The chain is Peptidoglycan-associated lipoprotein from Escherichia coli O157:H7.